The following is a 37-amino-acid chain: Large ribosomal subunit protein bL36 (37 aa).

It belongs to the bacterial ribosomal protein bL36 family.

This Parasynechococcus marenigrum (strain WH8102) protein is Large ribosomal subunit protein bL36.